A 215-amino-acid chain; its full sequence is Ribose-5-phosphate isomerase A (215 aa).

Substrate-binding positions include 26–29, 79–82, and 92–95; these read TGST, DGAD, and KGGG. Residue E101 is the Proton acceptor of the active site. K119 provides a ligand contact to substrate.

Belongs to the ribose 5-phosphate isomerase family. Homodimer.

It carries out the reaction aldehydo-D-ribose 5-phosphate = D-ribulose 5-phosphate. The protein operates within carbohydrate degradation; pentose phosphate pathway; D-ribose 5-phosphate from D-ribulose 5-phosphate (non-oxidative stage): step 1/1. In terms of biological role, catalyzes the reversible conversion of ribose-5-phosphate to ribulose 5-phosphate. The chain is Ribose-5-phosphate isomerase A from Xylella fastidiosa (strain Temecula1 / ATCC 700964).